We begin with the raw amino-acid sequence, 146 residues long: Hemoglobin subunit beta (146 aa).

V1 carries the N-acetylvaline modification. Residues 2–146 (HLTAEEKSLV…VANALAHKYH (145 aa)) enclose the Globin domain. At T12 the chain carries Phosphothreonine. A Phosphoserine modification is found at S44. N6-acetyllysine is present on K59. A heme b-binding site is contributed by H63. At K82 the chain carries N6-acetyllysine. H92 is a binding site for heme b. C93 carries the post-translational modification S-nitrosocysteine. Position 144 is an N6-acetyllysine (K144).

Belongs to the globin family. In terms of assembly, heterotetramer of two alpha chains and two beta chains. In terms of tissue distribution, red blood cells.

Involved in oxygen transport from the lung to the various peripheral tissues. The sequence is that of Hemoglobin subunit beta (HBB) from Vulpes vulpes (Red fox).